The primary structure comprises 226 residues: MKFKALVIDIDGTITCKNRELHLGAVKKMRTLNVPVVLATGNILCYARTASRLIGLGGAVIAENGGAVTVRYDVNGIFEGSLEECEKAFSFLSQHFKLTKLDPTYRKTEIALRRDFDLEEARSLLETQPFDIELVDTKYAIHIKSIKINKGIGLQKLAGMMGFEAEDFVAIGDSANDAEMFEAAGFGIAVANGDERVKEVANYVTEASFGDGAVEAIEFLESNGWI.

Aspartate 9 acts as the Nucleophile in catalysis. Mg(2+) is bound by residues aspartate 9 and aspartate 11. Residue lysine 150 coordinates substrate. Residues aspartate 173 and aspartate 177 each coordinate Mg(2+).

The protein belongs to the archaeal SPP-like hydrolase family. The cofactor is Mg(2+).

It catalyses the reaction 2-phosphoglycolate + H2O = glycolate + phosphate. In terms of biological role, catalyzes the dephosphorylation of 2-phosphoglycolate. In Methanosarcina mazei (strain ATCC BAA-159 / DSM 3647 / Goe1 / Go1 / JCM 11833 / OCM 88) (Methanosarcina frisia), this protein is Phosphoglycolate phosphatase.